Here is a 63-residue protein sequence, read N- to C-terminus: uncharacterized protein (63 aa).

This is an uncharacterized protein from Dictyostelium discoideum (Social amoeba).